Here is a 236-residue protein sequence, read N- to C-terminus: Small ribosomal subunit protein uS3 (236 aa).

In terms of domain architecture, KH type-2 spans 39-107 (IREILHKELK…DVVINIVEIR (69 aa)). Residues 213–236 (MAQDKRMNEGGGESPSPRSRRDAA) are disordered.

This sequence belongs to the universal ribosomal protein uS3 family. Part of the 30S ribosomal subunit. Forms a tight complex with proteins S10 and S14.

Binds the lower part of the 30S subunit head. Binds mRNA in the 70S ribosome, positioning it for translation. The protein is Small ribosomal subunit protein uS3 of Bradyrhizobium sp. (strain ORS 278).